We begin with the raw amino-acid sequence, 300 residues long: uncharacterized protein (300 aa).

The first 19 residues, 1–19, serve as a signal peptide directing secretion; the sequence is MKLKLLLIPLLGSSLLLSA. The N-palmitoyl cysteine moiety is linked to residue Cys-20. Residue Cys-20 is the site of S-diacylglycerol cysteine attachment.

Belongs to the MG439/MG440 family.

It localises to the cell membrane. This is an uncharacterized protein from Mycoplasma pneumoniae (strain ATCC 29342 / M129 / Subtype 1) (Mycoplasmoides pneumoniae).